The chain runs to 95 residues: Envelope glycoprotein N (95 aa).

The N-terminal stretch at 1–26 is a signal peptide; the sequence is MGLMDIHNAVCSLVIGVAILIATSQA. Residues 27–55 lie on the Virion surface side of the membrane; sequence TFVDWGSSITSMGDFWESTCSAVGVSIAF. The chain crosses the membrane as a helical span at residues 56 to 76; the sequence is SSGFSVLFYMGLVAVISALLA. The Intravirion segment spans residues 77–95; the sequence is GSYHACFRLFTADMFKEEW.

The protein belongs to the herpesviridae glycoprotein N family. As to quaternary structure, interacts (via N-terminus) with gM (via N-terminus). The gM-gN heterodimer forms the gCII complex.

The protein localises to the virion membrane. It localises to the host membrane. The protein resides in the host Golgi apparatus. It is found in the host trans-Golgi network. Envelope glycoprotein necessary for proper maturation of gM and modulation of its membrane fusion activity. Also plays a critical role in virion morphogenesis. This chain is Envelope glycoprotein N, found in Gallus gallus (Chicken).